The primary structure comprises 560 residues: Dihydroxy-acid dehydratase (560 aa).

A [2Fe-2S] cluster-binding site is contributed by Cys50. Mg(2+) is bound at residue Asp82. Cys123 contacts [2Fe-2S] cluster. Mg(2+)-binding residues include Asp124 and Lys125. At Lys125 the chain carries N6-carboxylysine. Residue Cys195 coordinates [2Fe-2S] cluster. Glu447 provides a ligand contact to Mg(2+). Residue Ser473 is the Proton acceptor of the active site.

Belongs to the IlvD/Edd family. In terms of assembly, homodimer. The cofactor is [2Fe-2S] cluster. Mg(2+) serves as cofactor.

The catalysed reaction is (2R)-2,3-dihydroxy-3-methylbutanoate = 3-methyl-2-oxobutanoate + H2O. It catalyses the reaction (2R,3R)-2,3-dihydroxy-3-methylpentanoate = (S)-3-methyl-2-oxopentanoate + H2O. The protein operates within amino-acid biosynthesis; L-isoleucine biosynthesis; L-isoleucine from 2-oxobutanoate: step 3/4. It participates in amino-acid biosynthesis; L-valine biosynthesis; L-valine from pyruvate: step 3/4. Its function is as follows. Functions in the biosynthesis of branched-chain amino acids. Catalyzes the dehydration of (2R,3R)-2,3-dihydroxy-3-methylpentanoate (2,3-dihydroxy-3-methylvalerate) into 2-oxo-3-methylpentanoate (2-oxo-3-methylvalerate) and of (2R)-2,3-dihydroxy-3-methylbutanoate (2,3-dihydroxyisovalerate) into 2-oxo-3-methylbutanoate (2-oxoisovalerate), the penultimate precursor to L-isoleucine and L-valine, respectively. In Methylibium petroleiphilum (strain ATCC BAA-1232 / LMG 22953 / PM1), this protein is Dihydroxy-acid dehydratase.